Here is a 149-residue protein sequence, read N- to C-terminus: 3-hydroxyacyl-[acyl-carrier-protein] dehydratase FabZ (149 aa).

His-49 is an active-site residue.

The protein belongs to the thioester dehydratase family. FabZ subfamily.

Its subcellular location is the cytoplasm. The catalysed reaction is a (3R)-hydroxyacyl-[ACP] = a (2E)-enoyl-[ACP] + H2O. Its function is as follows. Involved in unsaturated fatty acids biosynthesis. Catalyzes the dehydration of short chain beta-hydroxyacyl-ACPs and long chain saturated and unsaturated beta-hydroxyacyl-ACPs. The protein is 3-hydroxyacyl-[acyl-carrier-protein] dehydratase FabZ of Sulfurimonas denitrificans (strain ATCC 33889 / DSM 1251) (Thiomicrospira denitrificans (strain ATCC 33889 / DSM 1251)).